We begin with the raw amino-acid sequence, 465 residues long: U4/U6 small nuclear ribonucleoprotein PRP4 (465 aa).

WD repeat units lie at residues 173–212, 216–256, 263–302, 305–344, 347–386, 391–432, and 435–464; these read VSTKPISAVSLSTDDMVVATGSWAGDLQVLNSQTLQPLTQ, SHVG…GGLR, GHERRISDVKYHPSGKFIGSASHDMTWRLWDASTHQELLL, GHDKGVFSLSFQCDGSLVCSGGMDSLSMLWDIRSGSKVMT, GHSKPIYTVAWSPNGYQVATGGGDGIINVWDIRKRDEGQL, AHRN…KMGS, and GHTDKIISLDISNNSHFLVSGGWDRSIKLW.

In terms of assembly, component of the U4/U6-U5 tri-snRNP complex composed of the U4, U6 and U5 snRNAs and at least PRP3, PRP4, PRP6, PRP8, PRP18, PRP31, PRP38, SNU13, SNU23, SNU66, SNU114, SPP381, SMB1, SMD1, SMD2, SMD3, SMX2, SMX3, LSM2, LSM3, LSM4, LSM5, LSM6, LSM7, LSM8, BRR2 and DIB1.

The protein localises to the nucleus. Functionally, involved in RNA splicing. Is required for the association of U4/U6 snRNP with U5 snRNP in an early step of spliceosome assembly. The sequence is that of U4/U6 small nuclear ribonucleoprotein PRP4 (PRP4) from Saccharomyces cerevisiae (strain ATCC 204508 / S288c) (Baker's yeast).